Reading from the N-terminus, the 117-residue chain is Large ribosomal subunit protein bL20 (117 aa).

Belongs to the bacterial ribosomal protein bL20 family.

Functionally, binds directly to 23S ribosomal RNA and is necessary for the in vitro assembly process of the 50S ribosomal subunit. It is not involved in the protein synthesizing functions of that subunit. The chain is Large ribosomal subunit protein bL20 from Vibrio campbellii (strain ATCC BAA-1116).